We begin with the raw amino-acid sequence, 542 residues long: CTP synthase (542 aa).

The segment at 1–265 is amidoligase domain; the sequence is MTRYIFVTGG…DDFVVERFGL (265 aa). Position 13 (Ser-13) interacts with CTP. Ser-13 lines the UTP pocket. Residues 14-19 and Asp-71 each bind ATP; that span reads SLGKGI. Mg(2+) contacts are provided by Asp-71 and Glu-139. CTP is bound by residues 146 to 148, 186 to 191, and Lys-222; these read DIE and KTKPTQ. UTP-binding positions include 186 to 191 and Lys-222; that span reads KTKPTQ. One can recognise a Glutamine amidotransferase type-1 domain in the interval 290–541; it reads TIAMVGKYME…VKAALAQKNK (252 aa). Gly-351 lines the L-glutamine pocket. Cys-378 functions as the Nucleophile; for glutamine hydrolysis in the catalytic mechanism. L-glutamine is bound by residues 379-382, Glu-402, and Arg-469; that span reads LGMQ. Active-site residues include His-514 and Glu-516.

This sequence belongs to the CTP synthase family. In terms of assembly, homotetramer.

The catalysed reaction is UTP + L-glutamine + ATP + H2O = CTP + L-glutamate + ADP + phosphate + 2 H(+). The enzyme catalyses L-glutamine + H2O = L-glutamate + NH4(+). It carries out the reaction UTP + NH4(+) + ATP = CTP + ADP + phosphate + 2 H(+). It functions in the pathway pyrimidine metabolism; CTP biosynthesis via de novo pathway; CTP from UDP: step 2/2. With respect to regulation, allosterically activated by GTP, when glutamine is the substrate; GTP has no effect on the reaction when ammonia is the substrate. The allosteric effector GTP functions by stabilizing the protein conformation that binds the tetrahedral intermediate(s) formed during glutamine hydrolysis. Inhibited by the product CTP, via allosteric rather than competitive inhibition. Its function is as follows. Catalyzes the ATP-dependent amination of UTP to CTP with either L-glutamine or ammonia as the source of nitrogen. Regulates intracellular CTP levels through interactions with the four ribonucleotide triphosphates. In Pseudomonas entomophila (strain L48), this protein is CTP synthase.